A 430-amino-acid polypeptide reads, in one-letter code: 3-phosphoshikimate 1-carboxyvinyltransferase (430 aa).

Residues Lys23, Ser24, and Arg28 each contribute to the 3-phosphoshikimate site. Lys23 provides a ligand contact to phosphoenolpyruvate. Phosphoenolpyruvate is bound by residues Gly95 and Arg123. Ser169, Gln171, Asp315, and Lys342 together coordinate 3-phosphoshikimate. Gln171 contacts phosphoenolpyruvate. The active-site Proton acceptor is the Asp315. Phosphoenolpyruvate-binding residues include Arg346 and Arg388.

Belongs to the EPSP synthase family. As to quaternary structure, monomer.

Its subcellular location is the cytoplasm. It carries out the reaction 3-phosphoshikimate + phosphoenolpyruvate = 5-O-(1-carboxyvinyl)-3-phosphoshikimate + phosphate. It functions in the pathway metabolic intermediate biosynthesis; chorismate biosynthesis; chorismate from D-erythrose 4-phosphate and phosphoenolpyruvate: step 6/7. In terms of biological role, catalyzes the transfer of the enolpyruvyl moiety of phosphoenolpyruvate (PEP) to the 5-hydroxyl of shikimate-3-phosphate (S3P) to produce enolpyruvyl shikimate-3-phosphate and inorganic phosphate. The polypeptide is 3-phosphoshikimate 1-carboxyvinyltransferase (Streptococcus pyogenes serotype M3 (strain ATCC BAA-595 / MGAS315)).